A 906-amino-acid polypeptide reads, in one-letter code: Coatomer subunit beta' (906 aa).

WD repeat units follow at residues Ala-13–Thr-52, Val-55–Met-94, Ala-97–Gln-136, Gly-140–Thr-180, Gly-183–Thr-224, Gly-227–Thr-266, Ser-350–Phe-388, and Ser-390–Lys-425. Position 627 is an N6-acetyllysine (Lys-627). One copy of the WD 9 repeat lies at Ile-746–Lys-783. Residues Glu-837 to Pro-862 are disordered. At Ser-859 the chain carries Phosphoserine. Thr-861 bears the Phosphothreonine mark. Residues Ala-866–Glu-890 adopt a coiled-coil conformation.

It belongs to the WD repeat COPB2 family. Oligomeric complex that consists of at least the alpha, beta, beta', gamma, delta, epsilon and zeta subunits. Probably interacts with PEX11A. Interacts with SCYL1. Interacts with JAGN1.

It localises to the cytoplasm. The protein resides in the cytosol. The protein localises to the golgi apparatus membrane. Its subcellular location is the cytoplasmic vesicle. It is found in the COPI-coated vesicle membrane. Its function is as follows. The coatomer is a cytosolic protein complex that binds to dilysine motifs and reversibly associates with Golgi non-clathrin-coated vesicles, which further mediate biosynthetic protein transport from the ER, via the Golgi up to the trans Golgi network. Coatomer complex is required for budding from Golgi membranes, and is essential for the retrograde Golgi-to-ER transport of dilysine-tagged proteins. In mammals, the coatomer can only be recruited by membranes associated to ADP-ribosylation factors (ARFs), which are small GTP-binding proteins; the complex also influences the Golgi structural integrity, as well as the processing, activity, and endocytic recycling of LDL receptors. This coatomer complex protein, essential for Golgi budding and vesicular trafficking, is a selective binding protein (RACK) for protein kinase C, epsilon type. It binds to Golgi membranes in a GTP-dependent manner. This Macaca fascicularis (Crab-eating macaque) protein is Coatomer subunit beta' (COPB2).